We begin with the raw amino-acid sequence, 153 residues long: Small ribosomal subunit protein eS19 (153 aa).

2 disordered regions span residues 77–99 and 113–139; these read YGTSKQGTTRYRVRPHQKTKGSG and GYVETSENDGRRVTGDGRSLLDDTAGD. Over residues 120–133 the composition is skewed to basic and acidic residues; the sequence is NDGRRVTGDGRSLL.

This sequence belongs to the eukaryotic ribosomal protein eS19 family. In terms of assembly, part of the 30S ribosomal subunit.

Its function is as follows. May be involved in maturation of the 30S ribosomal subunit. The chain is Small ribosomal subunit protein eS19 from Haloarcula marismortui (strain ATCC 43049 / DSM 3752 / JCM 8966 / VKM B-1809) (Halobacterium marismortui).